The following is a 303-amino-acid chain: Uridine diphosphate glucose pyrophosphatase NUDT22 (303 aa).

Substrate contacts are provided by phenylalanine 56, tyrosine 87, arginine 139, alanine 144, aspartate 151, histidine 156, and glutamate 158. A Nudix hydrolase domain is found at 118 to 285 (ADPLGVGAAL…KGAIILYNRV (168 aa)). The interval 148–168 (GLVDVPGGHPEPQALCPGGSP) is disordered. Residues 175 to 196 (GQLVVHELFSSVLQEICDEVNL) carry the Nudix box motif. Residues glutamate 189 and glutamate 193 each coordinate Mg(2+). Serine 274 contacts substrate.

Belongs to the Nudix hydrolase family. Mg(2+) is required as a cofactor.

The enzyme catalyses UDP-sugar + H2O = UMP + alpha-D-aldose 1-phosphate.. Hydrolyzes UDP-glucose to glucose 1-phosphate and UMP and UDP-galactose to galactose 1-phosphate and UMP. Preferred substrate is UDP-glucose. This is Uridine diphosphate glucose pyrophosphatase NUDT22 (NUDT22) from Homo sapiens (Human).